The following is a 201-amino-acid chain: Flagellin B1 (201 aa).

A propeptide spanning residues 1-11 (MFEQNDDRDRG) is cleaved from the precursor.

It belongs to the archaeal flagellin family.

Its subcellular location is the archaeal flagellum. Functionally, flagellin is the subunit protein which polymerizes to form the filaments of archaeal flagella. The protein is Flagellin B1 (flaB1) of Natrialba magadii (strain ATCC 43099 / DSM 3394 / CCM 3739 / CIP 104546 / IAM 13178 / JCM 8861 / NBRC 102185 / NCIMB 2190 / MS3) (Natronobacterium magadii).